We begin with the raw amino-acid sequence, 428 residues long: Exodeoxyribonuclease 7 large subunit (428 aa).

The protein belongs to the XseA family. As to quaternary structure, heterooligomer composed of large and small subunits.

It localises to the cytoplasm. It carries out the reaction Exonucleolytic cleavage in either 5'- to 3'- or 3'- to 5'-direction to yield nucleoside 5'-phosphates.. Bidirectionally degrades single-stranded DNA into large acid-insoluble oligonucleotides, which are then degraded further into small acid-soluble oligonucleotides. This Mycobacterium leprae (strain TN) protein is Exodeoxyribonuclease 7 large subunit.